Consider the following 155-residue polypeptide: Ribosome maturation factor RimP (155 aa).

This sequence belongs to the RimP family.

Its subcellular location is the cytoplasm. Required for maturation of 30S ribosomal subunits. This Gemmatimonas aurantiaca (strain DSM 14586 / JCM 11422 / NBRC 100505 / T-27) protein is Ribosome maturation factor RimP.